The chain runs to 301 residues: Putative ribosomal RNA methyltransferase PB17E12.10c (301 aa).

Glycine 87, tryptophan 89, aspartate 107, and aspartate 186 together coordinate S-adenosyl-L-methionine. Catalysis depends on lysine 247, which acts as the Proton acceptor.

Belongs to the class I-like SAM-binding methyltransferase superfamily. RNA methyltransferase RlmE family.

It catalyses the reaction a uridine in rRNA + S-adenosyl-L-methionine = a 2'-O-methyluridine in rRNA + S-adenosyl-L-homocysteine + H(+). The protein is Putative ribosomal RNA methyltransferase PB17E12.10c of Schizosaccharomyces pombe (strain 972 / ATCC 24843) (Fission yeast).